A 528-amino-acid chain; its full sequence is MASVHGTTYELLRRQGIDTVFGNPGSNELPFLKDFPEDFRYILALQEACVVGIADGYAQASRKPAFINLHSAAGTGNAMGALSNAWNSHSPLIVTAGQQTRAMIGVEALLTNVDAANLPRPLVKWSYEPASAAEVPHAMSRAIHMASMAPQGPVYLSVPYDDWDKDADPQSHHLFDRHVSSSVRLNDQDLDILVKALNSASNPAIVLGPDVDAANANADCVMLAERLKAPVWVAPSAPRCPFPTRHPCFRGLMPAGIAAISQLLEGHDVVLVIGAPVFRYHQYDPGQYLKPGTRLISVTCDPLEAARAPMGDAIVADIGAMASALANLVEESSRQLPTAAPEPAKVDQDAGRLHPETVFDTLNDMAPENAIYLNESTSTTAQMWQRLNMRNPGSYYFCAAGGLGFALPAAIGVQLAEPERQVIAVIGDGSANYSISALWTAAQYNIPTIFVIMNNGTYGALRWFAGVLEAENVPGLDVPGIDFRALAKGYGVQALKADNLEQLKGSLQEALSAKGPVLIEVSTVSPVK.

Mg(2+)-binding residues include N117, L118, and R120. A thiamine pyrophosphate binding region spans residues 377-460 (TSTTAQMWQR…VIMNNGTYGA (84 aa)). D428, N455, and T457 together coordinate Ca(2+).

The protein belongs to the TPP enzyme family. As to quaternary structure, homotetramer. Ca(2+) is required as a cofactor. Requires thiamine diphosphate as cofactor. Mg(2+) serves as cofactor.

It carries out the reaction phenylglyoxylate + H(+) = benzaldehyde + CO2. Its pathway is aromatic compound metabolism; (R)-mandelate degradation; benzoate from (R)-mandelate: step 3/4. This Pseudomonas putida (Arthrobacter siderocapsulatus) protein is Benzoylformate decarboxylase (mdlC).